Consider the following 89-residue polypeptide: MVRLVITYDIRKDKIRNKLFRLLERYGAWKQYSVFELEINPVHKVELFHSIADLIEDTDRVRIYDLCERCQGKITELGEVSPDKMQVVI.

Residue Asp9 coordinates Mg(2+).

The protein belongs to the CRISPR-associated endoribonuclease Cas2 protein family. As to quaternary structure, homodimer, forms a heterotetramer with a Cas1 homodimer. Mg(2+) serves as cofactor.

In terms of biological role, CRISPR (clustered regularly interspaced short palindromic repeat), is an adaptive immune system that provides protection against mobile genetic elements (viruses, transposable elements and conjugative plasmids). CRISPR clusters contain sequences complementary to antecedent mobile elements and target invading nucleic acids. CRISPR clusters are transcribed and processed into CRISPR RNA (crRNA). Functions as a ssRNA-specific endoribonuclease. Involved in the integration of spacer DNA into the CRISPR cassette. In Methanospirillum hungatei JF-1 (strain ATCC 27890 / DSM 864 / NBRC 100397 / JF-1), this protein is CRISPR-associated endoribonuclease Cas2 2.